The primary structure comprises 287 residues: Glucose import system permease protein GlcU (287 aa).

7 consecutive transmembrane segments (helical) span residues 14–34 (HYLA…AMLI), 76–96 (IIVI…AYFF), 113–133 (VLFS…LLPL), 149–169 (IIFA…SMFI), 194–214 (IVFP…IIQA), 218–238 (FFIP…IAVL), and 250–270 (DTFA…VFLG). In terms of domain architecture, ABC transmembrane type-1 spans 71–269 (LINSLIIVIP…IIPLAIFVFL (199 aa)).

Belongs to the binding-protein-dependent transport system permease family. In terms of assembly, the complex is composed of two ATP-binding proteins (GlcV), two transmembrane proteins (GlcT and GlcU) and a solute-binding protein (GlcS).

Its subcellular location is the cell membrane. Functionally, part of the ABC transporter complex GlcSTUV involved in glucose uptake. Responsible for the translocation of the substrate across the membrane. This chain is Glucose import system permease protein GlcU, found in Saccharolobus solfataricus (strain ATCC 35092 / DSM 1617 / JCM 11322 / P2) (Sulfolobus solfataricus).